The sequence spans 113 residues: Large ribosomal subunit protein bL20c (113 aa).

The protein belongs to the bacterial ribosomal protein bL20 family.

The protein localises to the plastid. It is found in the chloroplast. Functionally, binds directly to 23S ribosomal RNA and is necessary for the in vitro assembly process of the 50S ribosomal subunit. It is not involved in the protein synthesizing functions of that subunit. The protein is Large ribosomal subunit protein bL20c of Staurastrum punctulatum (Green alga).